Consider the following 317-residue polypeptide: 1-phosphofructokinase (317 aa).

ATP is bound by residues 223-228 (SMGAEG) and 254-255 (GD). Residue D255 is the Proton acceptor of the active site.

The protein belongs to the carbohydrate kinase PfkB family.

It carries out the reaction beta-D-fructose 1-phosphate + ATP = beta-D-fructose 1,6-bisphosphate + ADP + H(+). In terms of biological role, catalyzes the ATP-dependent phosphorylation of fructose-l-phosphate to fructose-l,6-bisphosphate. The sequence is that of 1-phosphofructokinase from Vibrio cholerae serotype O1 (strain ATCC 39315 / El Tor Inaba N16961).